The chain runs to 226 residues: ATP synthase F(0) complex subunit a (226 aa).

The next 6 helical transmembrane spans lie at 6–26, 68–88, 97–117, 138–158, 164–184, and 189–209; these read FASF…IIMF, WSLM…LGLL, QLSM…ITGF, IPML…ALAV, ITAG…LTSI, and AILT…VALI.

This sequence belongs to the ATPase A chain family. Component of the ATP synthase complex composed at least of ATP5F1A/subunit alpha, ATP5F1B/subunit beta, ATP5MC1/subunit c (homooctomer), MT-ATP6/subunit a, MT-ATP8/subunit 8, ATP5ME/subunit e, ATP5MF/subunit f, ATP5MG/subunit g, ATP5MK/subunit k, ATP5MJ/subunit j, ATP5F1C/subunit gamma, ATP5F1D/subunit delta, ATP5F1E/subunit epsilon, ATP5PF/subunit F6, ATP5PB/subunit b, ATP5PD/subunit d, ATP5PO/subunit OSCP. ATP synthase complex consists of a soluble F(1) head domain (subunits alpha(3) and beta(3)) - the catalytic core - and a membrane F(0) domain - the membrane proton channel (subunits c, a, 8, e, f, g, k and j). These two domains are linked by a central stalk (subunits gamma, delta, and epsilon) rotating inside the F1 region and a stationary peripheral stalk (subunits F6, b, d, and OSCP). Interacts with DNAJC30; interaction is direct.

Its subcellular location is the mitochondrion inner membrane. It catalyses the reaction H(+)(in) = H(+)(out). Functionally, subunit a, of the mitochondrial membrane ATP synthase complex (F(1)F(0) ATP synthase or Complex V) that produces ATP from ADP in the presence of a proton gradient across the membrane which is generated by electron transport complexes of the respiratory chain. ATP synthase complex consist of a soluble F(1) head domain - the catalytic core - and a membrane F(1) domain - the membrane proton channel. These two domains are linked by a central stalk rotating inside the F(1) region and a stationary peripheral stalk. During catalysis, ATP synthesis in the catalytic domain of F(1) is coupled via a rotary mechanism of the central stalk subunits to proton translocation. With the subunit c (ATP5MC1), forms the proton-conducting channel in the F(0) domain, that contains two crucial half-channels (inlet and outlet) that facilitate proton movement from the mitochondrial intermembrane space (IMS) into the matrix. Protons are taken up via the inlet half-channel and released through the outlet half-channel, following a Grotthuss mechanism. The chain is ATP synthase F(0) complex subunit a from Ictidomys tridecemlineatus (Thirteen-lined ground squirrel).